The chain runs to 305 residues: Uridylate cyclase (305 aa).

Mn(2+) is bound by residues Asp58 and Asp102.

It belongs to the adenylyl cyclase class-4/guanylyl cyclase family. Pyrimidine cyclase subfamily. As to quaternary structure, homodimer. Mn(2+) serves as cofactor.

The protein localises to the cytoplasm. It carries out the reaction GTP = 3',5'-cyclic GMP + diphosphate. It catalyses the reaction UTP = 3',5'-cyclic UMP + diphosphate. In terms of biological role, pycsar (pyrimidine cyclase system for antiphage resistance) provides immunity against bacteriophage. The pyrimidine cyclase (PycC) synthesizes cyclic nucleotides in response to infection; these serve as specific second messenger signals. The signals activate the adjacent effector, leading to bacterial cell death and abortive phage infection. A clade D Pycsar system. The pyrimidine cyclase gene of a two-gene Pycsar system, generates cyclic UMP (cUMP) from UTP as well as cGMP from GTP to a lesser extent, has little to no activity on ATP or CTP. Expression of this and adjacent effector MePycTM (AC A0A1C5G2D0) probably confers resistance to bacteriophage. The genes are probably only expressed in response to bacteriophage infection. The chain is Uridylate cyclase from Micromonospora echinofusca.